Here is a 287-residue protein sequence, read N- to C-terminus: Elongation factor Ts (287 aa).

The segment at 80-83 is involved in Mg(2+) ion dislocation from EF-Tu; the sequence is TDFL.

This sequence belongs to the EF-Ts family.

The protein resides in the cytoplasm. Functionally, associates with the EF-Tu.GDP complex and induces the exchange of GDP to GTP. It remains bound to the aminoacyl-tRNA.EF-Tu.GTP complex up to the GTP hydrolysis stage on the ribosome. The protein is Elongation factor Ts of Pseudomonas putida (strain GB-1).